The following is a 549-amino-acid chain: Glucose-6-phosphate isomerase (549 aa).

Glu355 serves as the catalytic Proton donor. Residues His386 and Lys514 contribute to the active site.

The protein belongs to the GPI family.

The protein resides in the cytoplasm. The catalysed reaction is alpha-D-glucose 6-phosphate = beta-D-fructose 6-phosphate. Its pathway is carbohydrate biosynthesis; gluconeogenesis. It functions in the pathway carbohydrate degradation; glycolysis; D-glyceraldehyde 3-phosphate and glycerone phosphate from D-glucose: step 2/4. In terms of biological role, catalyzes the reversible isomerization of glucose-6-phosphate to fructose-6-phosphate. This chain is Glucose-6-phosphate isomerase, found in Salmonella paratyphi B (strain ATCC BAA-1250 / SPB7).